Here is a 2021-residue protein sequence, read N- to C-terminus: Fanconi anemia group M protein homolog (2021 aa).

The residue at position 30 (Ser-30) is a Phosphoserine. A Helicase ATP-binding domain is found at 86–254 (ISRSALFCNT…QVITNLLIGK (169 aa)). An ATP-binding site is contributed by 99-106 (LPTGLGKT). The short motif at 202–205 (DEAH) is the DEAH box element. In terms of domain architecture, Helicase C-terminal spans 437-612 (KLEEVILEHF…VLRLYQGSPR (176 aa)). 9 disordered regions span residues 638 to 657 (RSVQRRPFSSRGGIKASKSN), 837 to 886 (PCRA…RMAD), 1002 to 1049 (CSPY…LPGT), 1244 to 1273 (GAADVSGRHSDKEIKDAGGASGPLGRAISP), 1296 to 1319 (ASSSPVKQRVRSTPLSKSHASSKT), 1369 to 1441 (PRRT…RTCP), 1447 to 1466 (KGRNRNIRKGSAAQKNRSQV), 1615 to 1700 (NKKQ…QPSI), and 1712 to 1732 (AQSHNKIKSASPPCTGVESRK). The span at 1018-1035 (ASHSAGNSQQNLESNSAK) shows a compositional bias: polar residues. Positions 1249 to 1259 (SGRHSDKEIKD) are enriched in basic and acidic residues. Residues 1370 to 1379 (RRTEVEHLTS) show a composition bias toward basic and acidic residues. Residues 1388-1397 (RKTKKPKRNV) show a composition bias toward basic residues. A Phosphoserine modification is found at Ser-1637. Positions 1669-1682 (SGPSGSSVPPQVLS) are enriched in low complexity. The segment covering 1684–1700 (PSWNQSSRQRLQVQPSI) has biased composition (polar residues). The tract at residues 1689 to 2009 (SSRQRLQVQP…LNQERQKPDT (321 aa)) is interaction with FAAP24.

Belongs to the DEAD box helicase family. DEAH subfamily. FANCM sub-subfamily. Component of the Fanconi anemia (FA) core complex, which consists of CENPS, CENPX, FANCA, FANCB, FANCC, FANCE, FANCF, FANCG, FANCL, FANCM, FAAP24 and FAAP100. The FA core complex associates with Bloom syndrome (BLM) complex, which consists of at least BLM, DNA topoisomerase 3-alpha/TOP3A, RMI1/BLAP75, RPA1/RPA70 and RPA2/RPA32. This supercomplex between FA and BLM complexes has been called BRAFT. Forms a discrete complex with CENPS and CENPX, called FANCM-MHF; this interaction stimulates DNA binding and replication fork remodeling by FANCM and stabilizes the binding partners. Forms a heterodimer with FAAP24; this interaction increases FANCM single-stranded DNA-binding activity. Post-translationally, phosphorylated; hyperphosphorylated in response to genotoxic stress.

It localises to the nucleus. The catalysed reaction is ATP + H2O = ADP + phosphate + H(+). Its function is as follows. DNA-dependent ATPase component of the Fanconi anemia (FA) core complex. Required for the normal activation of the FA pathway, leading to monoubiquitination of the FANCI-FANCD2 complex in response to DNA damage, cellular resistance to DNA cross-linking drugs, and prevention of chromosomal breakage. In complex with CENPS and CENPX, binds double-stranded DNA (dsDNA), fork-structured DNA (fsDNA) and Holliday junction substrates. Its ATP-dependent DNA branch migration activity can process branched DNA structures such as a movable replication fork. This activity is strongly stimulated in the presence of CENPS and CENPX. In complex with FAAP24, efficiently binds to single-strand DNA (ssDNA), splayed-arm DNA, and 3'-flap substrates. In vitro, on its own, strongly binds ssDNA oligomers and weakly fsDNA, but does not bind to dsDNA. The protein is Fanconi anemia group M protein homolog (Fancm) of Mus musculus (Mouse).